Reading from the N-terminus, the 134-residue chain is Early E3B 14.9 kDa protein (134 aa).

The first 19 residues, 1–19, serve as a signal peptide directing secretion; the sequence is MQAMLPVILILLLPCIALA. The helical transmembrane segment at 54–78 threads the bilayer; sequence YWIVIVGIINILSCTFFSITIYPTF.

This sequence belongs to the adenoviridae E3_14 family. Phosphorylated on serine; O-glycosylated, but not N-glycosylated.

The protein resides in the host membrane. Functionally, down-regulates the EGF receptor and prevents cytolysis by TNF. The sequence is that of Early E3B 14.9 kDa protein from Homo sapiens (Human).